We begin with the raw amino-acid sequence, 175 residues long: MGRTLENKQQIVGELKELLADAELALVLDFKGLSIKEMSDLRDRLRASDSVCKVTKNTLMRRAIDGDSNWASLDSLLTGTNAFVLVKGDVGAGVKAVQTFQKELKKSETKGGLFEGKLLSQDEIKAIADLPSKEQLMAQIAGAINAVATKVAVGINEVPSGMARALKQHAEGGEG.

The protein belongs to the universal ribosomal protein uL10 family. In terms of assembly, part of the ribosomal stalk of the 50S ribosomal subunit. The N-terminus interacts with L11 and the large rRNA to form the base of the stalk. The C-terminus forms an elongated spine to which L12 dimers bind in a sequential fashion forming a multimeric L10(L12)X complex.

Its function is as follows. Forms part of the ribosomal stalk, playing a central role in the interaction of the ribosome with GTP-bound translation factors. The polypeptide is Large ribosomal subunit protein uL10 (Synechococcus sp. (strain CC9605)).